Consider the following 374-residue polypeptide: Translocating chain-associated membrane protein 1 (374 aa).

Residues 1–29 (MAIRKKSTKSPPVLSHEFVLQNHADIVSC) lie on the Cytoplasmic side of the membrane. The chain crosses the membrane as a helical span at residues 30 to 50 (VAMVFLLGLMFEITAKASIIF). Topologically, residues 51–76 (VTLQYNVTLPATEEQATESVSLYYYG) are lumenal. Asn-56 carries an N-linked (GlcNAc...) asparagine glycan. The helical transmembrane segment at 77–97 (IKDLATVFFYMLVAIIIHAVI) threads the bilayer. The Cytoplasmic portion of the chain corresponds to 98–121 (QEYMLDKINRRMHFSKTKHSKFNE). A TLC domain is found at 117–326 (SKFNESGQLS…NFQLRRWREH (210 aa)). A helical transmembrane segment spans residues 122 to 142 (SGQLSAFYLFACVWGTFILIS). Residues 143-159 (ENYISDPTILWRAYPHN) lie on the Lumenal side of the membrane. A helical membrane pass occupies residues 160 to 180 (LMTFQMKFFYISQLAYWLHAF). Over 181–192 (PELYFQKTKKED) the chain is Cytoplasmic. The chain crosses the membrane as a helical span at residues 193-213 (IPRQLVYIGLYLFHIAGAYLL). The Lumenal segment spans residues 214–217 (NLNH). Residues 218–238 (LGLVLLVLHYFVEFLFHISRL) form a helical membrane-spanning segment. At 239–251 (FYFSNEKYQKGFS) the chain is on the cytoplasmic side. Residues 252 to 272 (LWAVLFVLGRLLTLILSVLTV) traverse the membrane as a helical segment. The Lumenal segment spans residues 273-297 (GFGLARAENQKLDFSTGNFNVLAVR). The helical transmembrane segment at 298 to 318 (IAVLASICVTQAFMMWKFINF) threads the bilayer. Residues 319 to 374 (QLRRWREHSAFQAPAVKKKPTVTKGRSSKKGTENGVNGTLTSNVADSPRNKKEKSS) lie on the Cytoplasmic side of the membrane. Over residues 334–347 (VKKKPTVTKGRSSK) the composition is skewed to basic residues. The tract at residues 334–374 (VKKKPTVTKGRSSKKGTENGVNGTLTSNVADSPRNKKEKSS) is disordered. Residues 352-363 (NGVNGTLTSNVA) show a composition bias toward polar residues. Position 365 is a phosphoserine (Ser-365).

It belongs to the TRAM family. Interacts with SEC61B. May interact with Derlin-1/DERL1. As to quaternary structure, (Microbial infection) Interacts with human cytomegalovirus/HHV-5 proteins US2 and US11. In terms of processing, N-glycosylated.

The protein localises to the endoplasmic reticulum membrane. Functionally, involved in the translocation of nascent protein chains into or through the endoplasmic reticulum (ER) membrane by facilitating the proper chain positioning at the SEC61 channel. Regulates the exposure of nascent secretory protein chain to the cytosol during translocation into the ER. May affect the phospholipid bilayer in the vicinity of the lateral gate of the SEC61 channel, thereby facilitating ER protein transport. Intimately associates with transmembrane (TM) domain of nascent membrane proteins during the entire integration process into the ER membrane. Associates with the second TM domain of G-protein-coupled receptor opsin/OPSD nascent chain in the ER membrane, which may facilitate its integration into the membrane. Under conditions of ER stress, participates in the disposal of misfolded ER membrane proteins during the unfolded protein response (UPR), an integrated stress response (ISR) pathway, by selectively retrotranslocating misfolded ER-membrane proteins from the ER into the cytosol where they are ubiquitinated and degraded by the proteasome. (Microbial infection) In case of cytomegalovirus infection, participates in US2- and US11-mediated ER-to-cytosol retrotranslocation and subsequent degradation of major histocompatibility complex (MHC) class I heavy chains, thereby decreasing the immune detection by cytotoxic T-cells. The polypeptide is Translocating chain-associated membrane protein 1 (Homo sapiens (Human)).